A 431-amino-acid polypeptide reads, in one-letter code: Ornithine aminotransferase, mitochondrial (431 aa).

Lysine 286 is subject to N6-(pyridoxal phosphate)lysine.

Belongs to the class-III pyridoxal-phosphate-dependent aminotransferase family. In terms of assembly, homotetramer. Requires pyridoxal 5'-phosphate as cofactor.

The protein resides in the mitochondrion matrix. The enzyme catalyses a 2-oxocarboxylate + L-ornithine = L-glutamate 5-semialdehyde + an L-alpha-amino acid. The protein operates within amino-acid biosynthesis; L-proline biosynthesis; L-glutamate 5-semialdehyde from L-ornithine: step 1/1. This Drosophila melanogaster (Fruit fly) protein is Ornithine aminotransferase, mitochondrial (Oat).